Here is a 390-residue protein sequence, read N- to C-terminus: Anhydro-N-acetylmuramic acid kinase (390 aa).

An ATP-binding site is contributed by 9–16 (GTSLDGID).

It belongs to the anhydro-N-acetylmuramic acid kinase family.

The catalysed reaction is 1,6-anhydro-N-acetyl-beta-muramate + ATP + H2O = N-acetyl-D-muramate 6-phosphate + ADP + H(+). Its pathway is amino-sugar metabolism; 1,6-anhydro-N-acetylmuramate degradation. It participates in cell wall biogenesis; peptidoglycan recycling. Catalyzes the specific phosphorylation of 1,6-anhydro-N-acetylmuramic acid (anhMurNAc) with the simultaneous cleavage of the 1,6-anhydro ring, generating MurNAc-6-P. Is required for the utilization of anhMurNAc either imported from the medium or derived from its own cell wall murein, and thus plays a role in cell wall recycling. The sequence is that of Anhydro-N-acetylmuramic acid kinase from Bacillus cereus (strain B4264).